A 199-amino-acid chain; its full sequence is Interleukin-11 (199 aa).

A signal peptide spans 1-21 (MNCVCRLVLVVLSLWPDTAVA). An important for interaction with IL11RA and for the stimulation of cell proliferation region spans residues 182 to 190 (HLTLDWAVR).

The protein belongs to the IL-6 superfamily. As to quaternary structure, interacts with IL11RA to associate with IL6ST, giving rise to a multimeric signaling complex.

It is found in the secreted. Cytokine that stimulates the proliferation of hematopoietic stem cells and megakaryocyte progenitor cells and induces megakaryocyte maturation resulting in increased platelet production. Also promotes the proliferation of hepatocytes in response to liver damage. Binding to its receptor formed by IL6ST and IL11RA activates a signaling cascade that promotes cell proliferation. Signaling leads to the activation of intracellular protein kinases and the phosphorylation of STAT3. The interaction with the membrane-bound IL11RA and IL6ST stimulates 'classic signaling', whereas the binding of IL11 and soluble IL11RA to IL6ST stimulates 'trans-signaling'. The sequence is that of Interleukin-11 from Homo sapiens (Human).